Reading from the N-terminus, the 184-residue chain is Photosystem I assembly protein Ycf4 (184 aa).

A run of 2 helical transmembrane segments spans residues 22-42 and 57-77; these read FCWAFILFLGSLGFLLVGTSS and IIFFPQGIVMSFYGIAGLFIS.

The protein belongs to the Ycf4 family.

The protein resides in the plastid. Its subcellular location is the chloroplast thylakoid membrane. Functionally, seems to be required for the assembly of the photosystem I complex. The protein is Photosystem I assembly protein Ycf4 of Lobularia maritima (Sweet alyssum).